Reading from the N-terminus, the 424-residue chain is Protein shisa-9 (424 aa).

A signal peptide spans 1–23 (MRRVLRLLLGCFLTELCARMCRA). At 24–149 (QERSGHGQLA…DPLHDPTKDK (126 aa)) the chain is on the extracellular side. N-linked (GlcNAc...) asparagine glycans are attached at residues N45, N89, and N116. The chain crosses the membrane as a helical span at residues 150–170 (TNLIVYIICGVVAVMVLVGIF). Topologically, residues 171–424 (TKLGLEKAHR…ITNSKTEVTV (254 aa)) are cytoplasmic. Disordered regions lie at residues 333–373 (PRAF…TWDP) and 389–424 (LGIAESGSCDPLGTRTQHFPPTQPYFITNSKTEVTV). 2 stretches are compositionally biased toward polar residues: residues 362-373 (YNSTANFKTWDP) and 402-424 (TRTQHFPPTQPYFITNSKTEVTV).

This sequence belongs to the shisa family. SHISA9 subfamily. In terms of assembly, component of some AMPA receptors (ionotropic glutamate receptors) complex, at least composed of some AMPA receptor (GRIA1, GRIA2 and/or GRIA3), CACNG2 and SHISA9, as well as low level of DLG4. Brain-specific. Mainly expressed in neurons, including in hippocampus, cerebral cortex, striatum, thalamus, olfactory bulb and cerebellum. Expressed in most brain structures during embryonic and postnatal development.

It localises to the cell projection. The protein resides in the dendritic spine membrane. Its subcellular location is the synapse. Functionally, regulator of short-term neuronal synaptic plasticity in the dentate gyrus. Associates with AMPA receptors (ionotropic glutamate receptors) in synaptic spines and promotes AMPA receptor desensitization at excitatory synapses. This is Protein shisa-9 (Shisa9) from Mus musculus (Mouse).